Here is a 172-residue protein sequence, read N- to C-terminus: Large ribosomal subunit protein uL10 (172 aa).

The protein belongs to the universal ribosomal protein uL10 family. In terms of assembly, part of the ribosomal stalk of the 50S ribosomal subunit. The N-terminus interacts with L11 and the large rRNA to form the base of the stalk. The C-terminus forms an elongated spine to which L12 dimers bind in a sequential fashion forming a multimeric L10(L12)X complex.

Functionally, forms part of the ribosomal stalk, playing a central role in the interaction of the ribosome with GTP-bound translation factors. The polypeptide is Large ribosomal subunit protein uL10 (Mesorhizobium japonicum (strain LMG 29417 / CECT 9101 / MAFF 303099) (Mesorhizobium loti (strain MAFF 303099))).